Reading from the N-terminus, the 71-residue chain is Putative RNA-binding regulatory peptide (71 aa).

Interacts with IGF2BP1 (via KH3 and KH4 domains); the interaction results in increased binding of IGF2BP1 to N6-methyladenosine (m6A)-containing mRNAs. Detected in colon (at protein level).

In terms of biological role, enhances binding of IGF2BP1 to N6-methyladenosine (m6A)-containing mRNAs, thereby contributing to increased mRNA stability. Also increases the interaction of IGF2BP1 with RNA stabilizers ELAVL1/HUR, MATR3 and PABPC1, and increases the interaction of RNA stabilizers ELAVL1/HUR, MATR3 and PABPC1 with m6A-containing mRNAs. Contributes to MYC stability by enhancing binding of IGF2BP1 to m6A-containing MYC mRNAs and increasing recruitment of RNA stabilizing proteins to m6A-containing MYC mRNAs. The chain is Putative RNA-binding regulatory peptide from Homo sapiens (Human).